A 671-amino-acid polypeptide reads, in one-letter code: Beta-galactosidase 1 (671 aa).

Positions 1-18 are cleaved as a signal peptide; the sequence is MKLIVLIFFLLFINLNYC. Glu-200 acts as the Proton donor in catalysis. N-linked (GlcNAc...) asparagine glycosylation is present at Asn-228. Residue Glu-288 is the Nucleophile of the active site. Residues Asn-321, Asn-391, Asn-400, Asn-499, Asn-509, Asn-564, and Asn-595 are each glycosylated (N-linked (GlcNAc...) asparagine).

Belongs to the glycosyl hydrolase 35 family.

The protein resides in the lysosome. It catalyses the reaction Hydrolysis of terminal non-reducing beta-D-galactose residues in beta-D-galactosides.. In terms of biological role, cleaves beta-linked terminal galactosyl residues from gangliosides, glycoproteins, and glycosaminoglycans. The sequence is that of Beta-galactosidase 1 (glb1) from Dictyostelium discoideum (Social amoeba).